Here is a 230-residue protein sequence, read N- to C-terminus: Octanoyltransferase (230 aa).

The 178-residue stretch at 38-215 (AGGADTLLLL…AVCAALDGVL (178 aa)) folds into the BPL/LPL catalytic domain. Substrate is bound by residues 76-83 (RGGKITWH), 145-147 (AIG), and 158-160 (GFA). Catalysis depends on C176, which acts as the Acyl-thioester intermediate.

This sequence belongs to the LipB family.

The protein localises to the cytoplasm. It catalyses the reaction octanoyl-[ACP] + L-lysyl-[protein] = N(6)-octanoyl-L-lysyl-[protein] + holo-[ACP] + H(+). Its pathway is protein modification; protein lipoylation via endogenous pathway; protein N(6)-(lipoyl)lysine from octanoyl-[acyl-carrier-protein]: step 1/2. Functionally, catalyzes the transfer of endogenously produced octanoic acid from octanoyl-acyl-carrier-protein onto the lipoyl domains of lipoate-dependent enzymes. Lipoyl-ACP can also act as a substrate although octanoyl-ACP is likely to be the physiological substrate. This is Octanoyltransferase from Mycobacterium tuberculosis (strain ATCC 25177 / H37Ra).